Reading from the N-terminus, the 225-residue chain is Membrane protein (225 aa).

Residues 1-20 (MSNETNCTLDFEQSVELFKE) lie on the Virion surface side of the membrane. A helical membrane pass occupies residues 21-41 (YNLFITAFLLFLTIILQYGYA). At 42–51 (TRIRFIYILK) the chain is on the intravirion side. A helical transmembrane segment spans residues 52–72 (MIVLWCFWPLNIAVGVISCIY). Residues 73–77 (PPNTG) lie on the Virion surface side of the membrane. The chain crosses the membrane as a helical span at residues 78–98 (GLVAAIILTVFACLSFVGYWI). Over 99–225 (QSCRLFKRCR…VATGGSSLYT (127 aa)) the chain is Intravirion.

The protein belongs to the gammacoronaviruses M protein family. In terms of assembly, homomultimer. Interacts with envelope E protein in the budding compartment of the host cell, which is located between endoplasmic reticulum and the Golgi complex. Forms a complex with HE and S proteins. Interacts with nucleocapsid N protein. This interaction probably participates in RNA packaging into the virus.

It localises to the virion membrane. The protein localises to the host Golgi apparatus membrane. In terms of biological role, component of the viral envelope that plays a central role in virus morphogenesis and assembly via its interactions with other viral proteins. The sequence is that of Membrane protein from Avian infectious bronchitis virus (strain KB8523) (IBV).